A 521-amino-acid polypeptide reads, in one-letter code: AAA ATPase forming ring-shaped complexes (521 aa).

Residues 4–44 adopt a coiled-coil conformation; that stretch reads TEDLAALNDRLMAKNHALAEALSRAGKELTKAKSQLAQLAQ. ATP is bound at residue 235–240; it reads GNGKTM.

The protein belongs to the AAA ATPase family. In terms of assembly, homohexamer. Assembles into a hexameric ring structure.

The polypeptide is AAA ATPase forming ring-shaped complexes (Bifidobacterium longum (strain NCC 2705)).